The following is a 283-amino-acid chain: Probable replication-associated protein repA1 (283 aa).

It belongs to the IncFII RepA family.

Its function is as follows. This protein is essential for plasmid replication; it is involved in copy control functions. In Buchnera aphidicola subsp. Schizaphis graminum (strain Sg), this protein is Probable replication-associated protein repA1 (repA1).